A 337-amino-acid chain; its full sequence is Protein FAM169B (337 aa).

A disordered region spans residues 278-326 (STVHPKCSEEDTDTPGQASQEDGPTQFNHGESHKEWAVGEPERTQNGRR). Polar residues predominate over residues 291-306 (TPGQASQEDGPTQFNH). Residues 307-322 (GESHKEWAVGEPERTQ) show a composition bias toward basic and acidic residues.

This sequence belongs to the FAM169 family.

In Mus musculus (Mouse), this protein is Protein FAM169B (Fam169b).